The primary structure comprises 277 residues: Putative glucose-6-phosphate/phosphate-translocator-like protein 1 (277 aa).

Transmembrane regions (helical) follow at residues 8–28 (VLPSLTAIVGIGIYFAIWWAL), 46–66 (LWLTLTLSLACGSLMMLVSWV), 124–143 (MIGFMGAMISNLAFVFRNIF), 153–173 (VSVMNYYACLSMMSLLIVTPF), and 230–250 (PLKHVNALGAAIAILGTFIYS).

The protein belongs to the TPT transporter family. GPT (TC 2.A.7.9) subfamily.

The protein resides in the membrane. The chain is Putative glucose-6-phosphate/phosphate-translocator-like protein 1 from Arabidopsis thaliana (Mouse-ear cress).